The following is a 404-amino-acid chain: Tryptophan synthase beta chain (404 aa).

Lysine 99 carries the post-translational modification N6-(pyridoxal phosphate)lysine.

This sequence belongs to the TrpB family. As to quaternary structure, tetramer of two alpha and two beta chains. Pyridoxal 5'-phosphate is required as a cofactor.

It catalyses the reaction (1S,2R)-1-C-(indol-3-yl)glycerol 3-phosphate + L-serine = D-glyceraldehyde 3-phosphate + L-tryptophan + H2O. The protein operates within amino-acid biosynthesis; L-tryptophan biosynthesis; L-tryptophan from chorismate: step 5/5. Functionally, the beta subunit is responsible for the synthesis of L-tryptophan from indole and L-serine. The polypeptide is Tryptophan synthase beta chain (Rhizobium rhizogenes (strain K84 / ATCC BAA-868) (Agrobacterium radiobacter)).